A 560-amino-acid chain; its full sequence is Membrane protein insertase YidC (560 aa).

6 helical membrane passes run 5 to 25 (IINL…WQYF), 334 to 354 (AIDF…MNFF), 357 to 377 (YVGN…LLMF), 431 to 451 (LPIL…YVTI), 476 to 496 (LFGL…WPIL), and 522 to 542 (FMPL…LIYW).

The protein belongs to the OXA1/ALB3/YidC family. Type 1 subfamily. As to quaternary structure, interacts with the Sec translocase complex via SecD. Specifically interacts with transmembrane segments of nascent integral membrane proteins during membrane integration.

The protein localises to the cell inner membrane. Its function is as follows. Required for the insertion and/or proper folding and/or complex formation of integral membrane proteins into the membrane. Involved in integration of membrane proteins that insert both dependently and independently of the Sec translocase complex, as well as at least some lipoproteins. Aids folding of multispanning membrane proteins. The polypeptide is Membrane protein insertase YidC (Rickettsia felis (strain ATCC VR-1525 / URRWXCal2) (Rickettsia azadi)).